A 310-amino-acid chain; its full sequence is TLC domain-containing protein 2 (310 aa).

A run of 6 helical transmembrane segments spans residues 6–26 (LLVA…LQLL), 40–60 (NIFV…VGLW), 79–99 (VLVA…LWNQ), 117–137 (CLST…SLLL), 167–187 (ASLA…SLWL), and 194–214 (LSLA…SISI). The 195-residue stretch at 33 to 227 (RDRWMWRNIF…IRILTKDILQ (195 aa)) folds into the TLC domain.

This sequence belongs to the TLCD family.

The protein localises to the cell membrane. In terms of biological role, regulates the composition and fluidity of the plasma membrane. Inhibits the incorporation of membrane-fluidizing phospholipids containing omega-3 long-chain polyunsaturated fatty acids (LCPUFA) and thereby promotes membrane rigidity. Does not appear to have any effect on LCPUFA synthesis. This Mus musculus (Mouse) protein is TLC domain-containing protein 2 (Tlcd2).